We begin with the raw amino-acid sequence, 456 residues long: F-box/FBD/LRR-repeat protein At1g13780 (456 aa).

Residues F9 to N55 form the F-box domain. LRR repeat units lie at residues L197–R220, A243–S266, I302–G325, and F355–N379. Residues M372–F424 form the FBD domain.

The protein is F-box/FBD/LRR-repeat protein At1g13780 of Arabidopsis thaliana (Mouse-ear cress).